A 138-amino-acid polypeptide reads, in one-letter code: Translation initiation factor 2 subunit beta (138 aa).

Belongs to the eIF-2-beta/eIF-5 family. Heterotrimer composed of an alpha, a beta and a gamma chain.

In terms of biological role, eIF-2 functions in the early steps of protein synthesis by forming a ternary complex with GTP and initiator tRNA. This is Translation initiation factor 2 subunit beta from Methanococcus vannielii (strain ATCC 35089 / DSM 1224 / JCM 13029 / OCM 148 / SB).